Consider the following 257-residue polypeptide: Alcohol dehydrogenase 1 (257 aa).

9 to 33 provides a ligand contact to NAD(+); that stretch reads VFVGGLGFIAYEACKYLMNNDLASL. Serine 137 provides a ligand contact to substrate. Tyrosine 150 (proton acceptor) is an active-site residue.

Belongs to the short-chain dehydrogenases/reductases (SDR) family. As to quaternary structure, homodimer.

It carries out the reaction a primary alcohol + NAD(+) = an aldehyde + NADH + H(+). The enzyme catalyses a secondary alcohol + NAD(+) = a ketone + NADH + H(+). The polypeptide is Alcohol dehydrogenase 1 (ADH1) (Ceratitis capitata (Mediterranean fruit fly)).